The chain runs to 411 residues: Serine hydroxymethyltransferase (411 aa).

(6S)-5,6,7,8-tetrahydrofolate contacts are provided by residues leucine 119 and 123 to 125 (GHL). Lysine 228 is modified (N6-(pyridoxal phosphate)lysine). 351–353 (SPF) contacts (6S)-5,6,7,8-tetrahydrofolate.

Belongs to the SHMT family. In terms of assembly, homodimer. It depends on pyridoxal 5'-phosphate as a cofactor.

It localises to the cytoplasm. The enzyme catalyses (6R)-5,10-methylene-5,6,7,8-tetrahydrofolate + glycine + H2O = (6S)-5,6,7,8-tetrahydrofolate + L-serine. Its pathway is one-carbon metabolism; tetrahydrofolate interconversion. The protein operates within amino-acid biosynthesis; glycine biosynthesis; glycine from L-serine: step 1/1. In terms of biological role, catalyzes the reversible interconversion of serine and glycine with tetrahydrofolate (THF) serving as the one-carbon carrier. This reaction serves as the major source of one-carbon groups required for the biosynthesis of purines, thymidylate, methionine, and other important biomolecules. Also exhibits THF-independent aldolase activity toward beta-hydroxyamino acids, producing glycine and aldehydes, via a retro-aldol mechanism. This is Serine hydroxymethyltransferase from Clostridium novyi (strain NT).